Consider the following 404-residue polypeptide: MTDLAGTTRLLRAQGVTAPAGFRAAGVAAGIKASGALDLALVFNEGPDYAAAGVFTRNQVKAAPVLWTQQVLTTGRLRAVILNSGGANACTGPAGFADTHATAEAVAAALSDWGTETGAIEVAVCSTGLIGDRLPMDKLLAGVAHVVHEMHGGLVGGDEAAHAIMTTDNVPKQVALHHHDNWTVGGMAKGAGMLAPSLATMLCVLTTDAAAEPAALERALRRAAAATFDRLDIDGSCSTNDTVLLLSSGASEIPPAQADLDEAVLRVCDDLCAQLQADAEGVTKRVTVTVTGAATEDDALVAARQIARDSLVKTALFGSDPNWGRVLAAVGMAPITLDPDRISVSFNGAAVCVHGVGAPGAREVDLSDADIDITVDLGVGDGQARIRTTDLSHAYVEENSAYSS.

Substrate contacts are provided by Thr166, Lys189, Thr200, Glu280, Asn399, and Ser404. Catalysis depends on Thr200, which acts as the Nucleophile.

This sequence belongs to the ArgJ family. In terms of assembly, heterotetramer of two alpha and two beta chains.

The protein resides in the cytoplasm. The enzyme catalyses N(2)-acetyl-L-ornithine + L-glutamate = N-acetyl-L-glutamate + L-ornithine. It carries out the reaction L-glutamate + acetyl-CoA = N-acetyl-L-glutamate + CoA + H(+). The protein operates within amino-acid biosynthesis; L-arginine biosynthesis; L-ornithine and N-acetyl-L-glutamate from L-glutamate and N(2)-acetyl-L-ornithine (cyclic): step 1/1. Its pathway is amino-acid biosynthesis; L-arginine biosynthesis; N(2)-acetyl-L-ornithine from L-glutamate: step 1/4. Its function is as follows. Catalyzes two activities which are involved in the cyclic version of arginine biosynthesis: the synthesis of N-acetylglutamate from glutamate and acetyl-CoA as the acetyl donor, and of ornithine by transacetylation between N(2)-acetylornithine and glutamate. The chain is Arginine biosynthesis bifunctional protein ArgJ from Mycobacterium bovis (strain ATCC BAA-935 / AF2122/97).